The sequence spans 358 residues: Type II methyltransferase M.HpaII (358 aa).

Positions 32 to 356 (FTFIDLFAGI…KKILEKLGNL (325 aa)) constitute an SAM-dependent MTase C5-type domain. Cys-103 is a catalytic residue.

This sequence belongs to the class I-like SAM-binding methyltransferase superfamily. C5-methyltransferase family. Monomer.

The catalysed reaction is a 2'-deoxycytidine in DNA + S-adenosyl-L-methionine = a 5-methyl-2'-deoxycytidine in DNA + S-adenosyl-L-homocysteine + H(+). Functionally, a methylase that recognizes the double-stranded sequence 5'-CCGG-3', methylates C-2 on both strands, and protects the DNA from cleavage by the HpaII endonuclease. In Haemophilus parainfluenzae, this protein is Type II methyltransferase M.HpaII.